A 352-amino-acid polypeptide reads, in one-letter code: Photosystem II D2 protein (352 aa).

Residues Cys-40–Thr-60 form a helical membrane-spanning segment. His-117 contacts chlorophyll a. The chain crosses the membrane as a helical span at residues Gly-124–Pro-140. 2 residues coordinate pheophytin a: Gln-129 and Asn-142. A helical transmembrane segment spans residues Val-152–Ser-165. Residue His-197 coordinates chlorophyll a. The helical transmembrane segment at Gly-207–Glu-227 threads the bilayer. 2 residues coordinate a plastoquinone: His-214 and Phe-261. Residue His-214 coordinates Fe cation. Fe cation is bound at residue His-268. Residues Gly-278 to Arg-294 traverse the membrane as a helical segment.

The protein belongs to the reaction center PufL/M/PsbA/D family. As to quaternary structure, PSII is composed of 1 copy each of membrane proteins PsbA, PsbB, PsbC, PsbD, PsbE, PsbF, PsbH, PsbI, PsbJ, PsbK, PsbL, PsbM, PsbT, PsbX, PsbY, PsbZ, Psb30/Ycf12, peripheral proteins PsbO, CyanoQ (PsbQ), PsbU, PsbV and a large number of cofactors. It forms dimeric complexes. The D1/D2 heterodimer binds P680, chlorophylls that are the primary electron donor of PSII, and subsequent electron acceptors. It shares a non-heme iron and each subunit binds pheophytin, quinone, additional chlorophylls, carotenoids and lipids. There is also a Cl(-1) ion associated with D1 and D2, which is required for oxygen evolution. The PSII complex binds additional chlorophylls, carotenoids and specific lipids. is required as a cofactor.

It is found in the cellular thylakoid membrane. The catalysed reaction is 2 a plastoquinone + 4 hnu + 2 H2O = 2 a plastoquinol + O2. Photosystem II (PSII) is a light-driven water:plastoquinone oxidoreductase that uses light energy to abstract electrons from H(2)O, generating O(2) and a proton gradient subsequently used for ATP formation. It consists of a core antenna complex that captures photons, and an electron transfer chain that converts photonic excitation into a charge separation. The D1/D2 (PsbA/PsbD) reaction center heterodimer binds P680, the primary electron donor of PSII as well as several subsequent electron acceptors. D2 is needed for assembly of a stable PSII complex. In Synechococcus sp. (strain JA-2-3B'a(2-13)) (Cyanobacteria bacterium Yellowstone B-Prime), this protein is Photosystem II D2 protein.